The chain runs to 1173 residues: Alpha-mannosidase 2 (1173 aa).

Residues 1–21 (MPFSSYIGNSRRSSTGGGTGG) form a disordered region. Over 1–50 (MPFSSYIGNSRRSSTGGGTGGWGQSLLPTALSKSKLAINRKPRKRTLVVN) the chain is Cytoplasmic. A helical; Signal-anchor transmembrane segment spans residues 51-71 (FIFANFFVIALTVSLLFFLLT). Over 72-1173 (LFHFGVPGPI…AYKLELRPHK (1102 aa)) the chain is Lumenal. N-linked (GlcNAc...) asparagine glycosylation is present at Asn-106. His-162 and Asp-164 together coordinate Zn(2+). The N-linked (GlcNAc...) asparagine glycan is linked to Asn-262. Asp-276 is a Zn(2+) binding site. Asp-276 (nucleophile) is an active-site residue. Asn-467 carries an N-linked (GlcNAc...) asparagine glycan. Residue His-564 participates in Zn(2+) binding. Asn-675, Asn-772, Asn-782, Asn-991, Asn-1098, and Asn-1108 each carry an N-linked (GlcNAc...) asparagine glycan.

The protein belongs to the glycosyl hydrolase 38 family. As to quaternary structure, homodimer; disulfide-linked. Interacts with GALT1. Zn(2+) is required as a cofactor. In terms of processing, glycosylated.

Its subcellular location is the golgi apparatus membrane. It carries out the reaction N(4)-{beta-D-GlcNAc-(1-&gt;2)-alpha-D-Man-(1-&gt;3)-[alpha-D-Man-(1-&gt;3)-[alpha-D-Man-(1-&gt;6)]-alpha-D-Man-(1-&gt;6)]-beta-D-Man-(1-&gt;4)-beta-D-GlcNAc-(1-&gt;4)-beta-D-GlcNAc}-L-asparaginyl-[protein] + 2 H2O = 2 alpha-D-mannopyranose + an N(4)-{beta-D-GlcNAc-(1-&gt;2)-alpha-D-Man-(1-&gt;3)-[alpha-D-Man-(1-&gt;6)]-beta-D-Man-(1-&gt;4)-beta-D-GlcNAc-(1-&gt;4)-beta-D-GlcNAc}-L-asparaginyl-[protein]. It functions in the pathway protein modification; protein glycosylation. Inhibited by 1 mM Cu(2+) and by the class II alpha-mannosidase inhibitor swainsonine. Catalyzes the first committed step in the biosynthesis of complex N-glycans. It controls conversion of high mannose to complex N-glycans; the final hydrolytic step in the N-glycan maturation pathway. Converts GlcNAcMan(5)GlcNAc(2) (Man5Gn) into GlcNAcMan(3)GlcNAc(2) (MGn) by sequential removal of two alpha1,6- and alpha1,3-linked mannose residues from the alpha1,6-mannose branch of the substrate. To a lesser extent, also able to cleave beta1,2-xylosylated Man5Gn-glycopeptide (Man5GnX-GP) and pyridylaminated substrates Man5Gn-PA and Man5GnX-PA, but not active toward Man5-glycopeptide. Required for resistance to salt stress. The chain is Alpha-mannosidase 2 from Arabidopsis thaliana (Mouse-ear cress).